A 119-amino-acid chain; its full sequence is MPRVKGGTVTRKRRKKVLKLAKGYFGSKHTLYKVANQQVMKSGNYAFRDRRQKKRDFRKLWITRINAAARMNGLSYSRLMHGLKLSGIEVNRKMLADLAVNDLNAFNQLADAAKAQLNK.

Belongs to the bacterial ribosomal protein bL20 family.

Binds directly to 23S ribosomal RNA and is necessary for the in vitro assembly process of the 50S ribosomal subunit. It is not involved in the protein synthesizing functions of that subunit. This Bacillus licheniformis (strain ATCC 14580 / DSM 13 / JCM 2505 / CCUG 7422 / NBRC 12200 / NCIMB 9375 / NCTC 10341 / NRRL NRS-1264 / Gibson 46) protein is Large ribosomal subunit protein bL20.